Here is a 147-residue protein sequence, read N- to C-terminus: Ribosomal RNA large subunit methyltransferase H (147 aa).

S-adenosyl-L-methionine-binding positions include Leu-64, Gly-95, and Leu-114–Leu-119.

Belongs to the RNA methyltransferase RlmH family. As to quaternary structure, homodimer.

It localises to the cytoplasm. The catalysed reaction is pseudouridine(1915) in 23S rRNA + S-adenosyl-L-methionine = N(3)-methylpseudouridine(1915) in 23S rRNA + S-adenosyl-L-homocysteine + H(+). In terms of biological role, specifically methylates the pseudouridine at position 1915 (m3Psi1915) in 23S rRNA. The sequence is that of Ribosomal RNA large subunit methyltransferase H from Polynucleobacter asymbioticus (strain DSM 18221 / CIP 109841 / QLW-P1DMWA-1) (Polynucleobacter necessarius subsp. asymbioticus).